A 318-amino-acid polypeptide reads, in one-letter code: Taste receptor type 2 member 60 (318 aa).

At 1–7 (MNGDHMV) the chain is on the extracellular side. Residues 8 to 28 (LGSSVTDKKAIILVTILLLLR) traverse the membrane as a helical segment. At 29–40 (LVAIAGNGFIIA) the chain is on the cytoplasmic side. Residues 41-61 (ALGVEWVLRRMLLPCDXLLVS) traverse the membrane as a helical segment. Residues 62–88 (LGASRFCLQSVVMGKTIYVFLHPMAFP) are Extracellular-facing. The chain crosses the membrane as a helical span at residues 89–109 (YNPVLQFLAFQWDFLNAATLW). Topologically, residues 110–128 (FSTWLSVFYCVKIAAFTHP) are cytoplasmic. Residues 129–149 (VFLWLKHKLSGWLPWILFSSV) traverse the membrane as a helical segment. Residues 150-183 (GLSSFTTILFFIGNHRMYQNYLRNHLQPWNITGN) are Extracellular-facing. N-linked (GlcNAc...) asparagine glycosylation occurs at N179. Residues 184-204 (SIRSYCEKFYLFPLKMITWTM) traverse the membrane as a helical segment. Over 205 to 234 (PTAVFFICMILLITSLGRHMKKALLTTSGF) the chain is Cytoplasmic. Residues 235 to 255 (REPSMQAHIKALLALLSFAML) form a helical membrane-spanning segment. Residues 256–264 (FISYFLSLV) are Extracellular-facing. A helical membrane pass occupies residues 265-285 (FSAAGIFPPLDFKFWVWESVI). Topologically, residues 286-318 (YLCAAVHPIILLFSNCRLRAVLKSCRSSRCGTP) are cytoplasmic.

Belongs to the G-protein coupled receptor T2R family.

The protein localises to the membrane. In terms of biological role, receptor that may play a role in the perception of bitterness and is gustducin-linked. May play a role in sensing the chemical composition of the gastrointestinal content. The activity of this receptor may stimulate alpha gustducin, mediate PLC-beta-2 activation and lead to the gating of TRPM5. The polypeptide is Taste receptor type 2 member 60 (TAS2R60) (Gorilla gorilla gorilla (Western lowland gorilla)).